We begin with the raw amino-acid sequence, 106 residues long: MNDSEFHRLADALWLTIEERLDSWDGDSDIDCEINGGVLTLSFENGSKIIINRQEPLHQVWLATKQGGYHFDLKGDEWICDRSGETFWELLEQAATQQAGEKVSFR.

It belongs to the frataxin family.

Involved in iron-sulfur (Fe-S) cluster assembly. May act as a regulator of Fe-S biogenesis. The protein is Iron-sulfur cluster assembly protein CyaY of Salmonella paratyphi B (strain ATCC BAA-1250 / SPB7).